The primary structure comprises 393 residues: Protein TsgA (393 aa).

12 helical membrane passes run 11 to 31, 51 to 71, 78 to 98, 101 to 121, 134 to 154, 162 to 182, 206 to 226, 245 to 265, 273 to 293, 298 to 318, 332 to 352, and 361 to 381; these read WISFLSYALTGALVIVTGMVM, FLNAGILISIFLNAWLMEIVP, FGFILMILAVAGLMLSHSLAL, AAMFVLGLVSGITMSIGTFLI, LLFTDSFFSMAGMVFPMVAAF, WYWVYACIGLVYLAIFILTFG, IGVLFLAVAALCYILGQLGFI, ALVSDFWMSYMFGMWAFSFIL, ILTVLAGMATVLMYLFITGTQ, WFILTLGFFSSAIYTSIITLG, FILTCGTIGTMLTFVVTGPIV, and LLTANGLYAVVFVMCFALGFV.

It belongs to the major facilitator superfamily. TsgA family.

It localises to the cell inner membrane. This is Protein TsgA from Salmonella arizonae (strain ATCC BAA-731 / CDC346-86 / RSK2980).